The sequence spans 425 residues: Malate transporter MleP (425 aa).

Helical transmembrane passes span 11–31, 35–55, 65–85, 96–116, 134–154, 196–216, 246–266, 269–289, 310–330, 339–359, and 401–421; these read GISL…TLLG, LDMV…YFIG, LGGG…FHIV, FMGG…CGSI, IALI…MLIG, IFSQ…IGAL, IKLD…LLMA, ILNK…IVFI, VIMT…LIDL, WQFV…SWFL, and FAQM…GILI.

This sequence belongs to the 2-hydroxycarboxylate transporter (2-HCT) (TC 2.A.24) family.

Its subcellular location is the cell membrane. The enzyme catalyses (S)-lactate(in) + (S)-malate(out) = (S)-lactate(out) + (S)-malate(in). It catalyses the reaction (R)-lactate(in) + (S)-malate(out) = (R)-lactate(out) + (S)-malate(in). It carries out the reaction glycolate(in) + (S)-malate(out) = glycolate(out) + (S)-malate(in). Its function is as follows. Secondary transporter involved in malolactic fermentation. Catalyzes the uptake of divalent malate into the cell coupled to the exit of monovalent lactate, a product of malate degradation (precursor/product exchange). The malate/lactate exchange is electrogenic and results in the generation of a membrane potential. Is highly selective for the S-enantiomer of malate. In the absence of lactate, MleP can also catalyze the proton-dependent transport of malate. In vitro, transports a range of substrates that contain the 2-hydroxycarboxylate motif, HO-CR(2)-COO(-), with a preference for malate, lactate and glycolate. Modification of the OH or the COO(-) groups of the 2-hydroxycarboxylate motif drastically reduces the affinity of the transporter for the substrates, indicating their relevance in substrate recognition. Significant activity is also observed with some 2-oxocarboxylates. Transports only poorly citromalate. Citrate binds to MleP but is not translocated. The protein is Malate transporter MleP of Lactococcus lactis subsp. lactis (strain IL1403) (Streptococcus lactis).